The following is a 427-amino-acid chain: TNF receptor-associated factor family protein DDB_G0285149 (427 aa).

Residues 20-65 form an RING-type zinc finger; sequence CIVCTDLLSESHDKIQVNQCPHGHCLCSDCWTKQIENKKKECPICR. 2 TRAF-type zinc fingers span residues 122-178 and 178-234; these read THFK…INKD and DHLE…KHQA. One can recognise an MATH domain in the interval 284–415; that stretch reads KYSNQWVIEN…GNKLTIKFEI (132 aa).

The protein belongs to the TNF receptor-associated factor family. A subfamily.

Its subcellular location is the cytoplasm. In terms of biological role, probable adapter protein and signal transducer that links members of the tumor necrosis factor receptor family to different signaling pathways by association with the receptor cytoplasmic domain and kinases. The sequence is that of TNF receptor-associated factor family protein DDB_G0285149 from Dictyostelium discoideum (Social amoeba).